The sequence spans 324 residues: Biotin synthase (324 aa).

In terms of domain architecture, Radical SAM core spans 42-269 (NEVQISSLLN…KSYIRLAAGR (228 aa)). C57, C61, and C64 together coordinate [4Fe-4S] cluster. [2Fe-2S] cluster contacts are provided by C101, C132, C192, and R264.

It belongs to the radical SAM superfamily. Biotin synthase family. Homodimer. It depends on [4Fe-4S] cluster as a cofactor. Requires [2Fe-2S] cluster as cofactor.

The enzyme catalyses (4R,5S)-dethiobiotin + (sulfur carrier)-SH + 2 reduced [2Fe-2S]-[ferredoxin] + 2 S-adenosyl-L-methionine = (sulfur carrier)-H + biotin + 2 5'-deoxyadenosine + 2 L-methionine + 2 oxidized [2Fe-2S]-[ferredoxin]. It participates in cofactor biosynthesis; biotin biosynthesis; biotin from 7,8-diaminononanoate: step 2/2. Catalyzes the conversion of dethiobiotin (DTB) to biotin by the insertion of a sulfur atom into dethiobiotin via a radical-based mechanism. This is Biotin synthase from Ehrlichia canis (strain Jake).